A 276-amino-acid chain; its full sequence is Pantothenate synthetase (276 aa).

26 to 33 (MGFLHEGH) is a binding site for ATP. Histidine 33 acts as the Proton donor in catalysis. Glutamine 57 contacts (R)-pantoate. Glutamine 57 is a binding site for beta-alanine. 142-145 (GLKD) is a binding site for ATP. Glutamine 148 contributes to the (R)-pantoate binding site. ATP-binding positions include isoleucine 171 and 179–182 (KSSR).

Belongs to the pantothenate synthetase family. Homodimer.

It localises to the cytoplasm. The enzyme catalyses (R)-pantoate + beta-alanine + ATP = (R)-pantothenate + AMP + diphosphate + H(+). It participates in cofactor biosynthesis; (R)-pantothenate biosynthesis; (R)-pantothenate from (R)-pantoate and beta-alanine: step 1/1. Catalyzes the condensation of pantoate with beta-alanine in an ATP-dependent reaction via a pantoyl-adenylate intermediate. This is Pantothenate synthetase from Exiguobacterium sibiricum (strain DSM 17290 / CCUG 55495 / CIP 109462 / JCM 13490 / 255-15).